The sequence spans 274 residues: Ethanolamine ammonia-lyase small subunit (274 aa).

The adenosylcob(III)alamin site is built by Val161, Glu182, and Cys211.

This sequence belongs to the EutC family. As to quaternary structure, the basic unit is a heterodimer which dimerizes to form tetramers. The heterotetramers trimerize; 6 large subunits form a core ring with 6 small subunits projecting outwards. Requires adenosylcob(III)alamin as cofactor.

The protein localises to the bacterial microcompartment. The catalysed reaction is ethanolamine = acetaldehyde + NH4(+). It participates in amine and polyamine degradation; ethanolamine degradation. Its function is as follows. Catalyzes the deamination of various vicinal amino-alcohols to oxo compounds. Allows this organism to utilize ethanolamine as the sole source of nitrogen and carbon in the presence of external vitamin B12. This Pseudomonas fluorescens (strain ATCC BAA-477 / NRRL B-23932 / Pf-5) protein is Ethanolamine ammonia-lyase small subunit.